Reading from the N-terminus, the 371-residue chain is MKFPRKGIPQEEVMRELEKYTSKDLSFSSGKILGSMCTLPHELAKEVFCMYMDRNLGDPGLHPGTKKIEEEVIEMLSDLLHLERGYGHIVSGGTEANILAVRAFRNLADVENPELILPKSAHFSFIKAGEMLGVKLIWADLNPDYTVDVKDVEAKISENTIGIVGIAGTTGLGVVDDIPALSDLARDYGIPLHVDAAFGGFVIPFAKELGYDLPDFDFKLKGVQSITIDPHKMGMAPIPAGGIVFRHKKYLRAISVLAPYLAGGKIWQATITGTRPGASVLAVWALIKHLGFEGYMEIVDRAMKLSRWFAEEIKKTPGAWLVREPMLNIVSFKTKNLRRVERELKSRGWGISAHRGYIRIVSHASCDGGHD.

Lys-232 carries the N6-(pyridoxal phosphate)lysine modification.

It belongs to the group II decarboxylase family. MfnA subfamily. Requires pyridoxal 5'-phosphate as cofactor.

It catalyses the reaction L-aspartate + H(+) = beta-alanine + CO2. The protein operates within cofactor biosynthesis; coenzyme A biosynthesis. Functionally, catalyzes the decarboxylation of L-aspartate to produce beta-alanine. The polypeptide is Probable L-aspartate decarboxylase (Pyrococcus furiosus (strain ATCC 43587 / DSM 3638 / JCM 8422 / Vc1)).